The sequence spans 518 residues: Filamentous growth regulator 15 (518 aa).

Residues 1-41 (MESTLSVSDEKLTNSSTALNNCGDNKESSQVLTTANTTTDN) are compositionally biased toward polar residues. 3 disordered regions span residues 1-63 (MEST…SKER), 75-101 (VDPN…DHGK), and 261-307 (KSRS…KQHR). Residues 42 to 52 (QQVQPKSQHQQ) are compositionally biased toward low complexity. The segment covering 77–95 (PNQQSKNTVSDSVQDTTGV) has biased composition (polar residues). Basic residues predominate over residues 262–274 (SRSRSKVTKKRKV). Low complexity predominate over residues 283 to 298 (SNTATATTSVTTPDAN). The C2H2-type zinc-finger motif lies at 374 to 406 (HECQLPSAEEPHKLCLRRFSRKYELIRHQETVH). Positions 492–518 (RKSSGDDTNYMETSDLESGEEEVTFNK) are disordered. A compositionally biased stretch (acidic residues) spans 505–518 (SDLESGEEEVTFNK).

It is found in the nucleus. Probable transcription factor involved in the regulation of filamentous growth. The protein is Filamentous growth regulator 15 (FGR15) of Candida albicans (strain SC5314 / ATCC MYA-2876) (Yeast).